The chain runs to 134 residues: Large ribosomal subunit protein eL32 (134 aa).

Belongs to the eukaryotic ribosomal protein eL32 family.

In Spodoptera frugiperda (Fall armyworm), this protein is Large ribosomal subunit protein eL32 (RpL32).